The primary structure comprises 125 residues: 17 kDa gas vesicle protein (125 aa).

Belongs to the gas vesicle GvpC family.

It localises to the gas vesicle. Functionally, gas vesicles (GV) are hollow, gas filled proteinaceous nanostructures. During planktonic growth they allow positioning of the organism at a favorable depth for light or nutrient acquisition. The polypeptide is 17 kDa gas vesicle protein (Dactylococcopsis salina (strain PCC 8305) (Myxobactron salinum)).